A 355-amino-acid polypeptide reads, in one-letter code: Methylthioribose-1-phosphate isomerase (355 aa).

Substrate-binding positions include 47 to 49 (RGA), Arg90, and Gln197. Asp238 functions as the Proton donor in the catalytic mechanism. 248–249 (NK) contributes to the substrate binding site.

The protein belongs to the eIF-2B alpha/beta/delta subunits family. MtnA subfamily.

It catalyses the reaction 5-(methylsulfanyl)-alpha-D-ribose 1-phosphate = 5-(methylsulfanyl)-D-ribulose 1-phosphate. It participates in amino-acid biosynthesis; L-methionine biosynthesis via salvage pathway; L-methionine from S-methyl-5-thio-alpha-D-ribose 1-phosphate: step 1/6. Catalyzes the interconversion of methylthioribose-1-phosphate (MTR-1-P) into methylthioribulose-1-phosphate (MTRu-1-P). In Herpetosiphon aurantiacus (strain ATCC 23779 / DSM 785 / 114-95), this protein is Methylthioribose-1-phosphate isomerase.